The chain runs to 679 residues: UvrABC system protein B (679 aa).

One can recognise a Helicase ATP-binding domain in the interval 31 to 414 (ENLTDGLAHQ…ELEKSGTEII (384 aa)). Residue 44–51 (GVTGSGKT) coordinates ATP. A Beta-hairpin motif is present at residues 97–120 (YYDYYQPEAYVPSSDTFIEKDASI). Positions 436-589 (QVDDLLSEAR…QIKYNEEHGI (154 aa)) constitute a Helicase C-terminal domain. The region spanning 639–674 (QQQIKKLEQQMYKFAQDLEFEKAAAIRDQLHQLREQ) is the UVR domain.

This sequence belongs to the UvrB family. Forms a heterotetramer with UvrA during the search for lesions. Interacts with UvrC in an incision complex.

The protein resides in the cytoplasm. Functionally, the UvrABC repair system catalyzes the recognition and processing of DNA lesions. A damage recognition complex composed of 2 UvrA and 2 UvrB subunits scans DNA for abnormalities. Upon binding of the UvrA(2)B(2) complex to a putative damaged site, the DNA wraps around one UvrB monomer. DNA wrap is dependent on ATP binding by UvrB and probably causes local melting of the DNA helix, facilitating insertion of UvrB beta-hairpin between the DNA strands. Then UvrB probes one DNA strand for the presence of a lesion. If a lesion is found the UvrA subunits dissociate and the UvrB-DNA preincision complex is formed. This complex is subsequently bound by UvrC and the second UvrB is released. If no lesion is found, the DNA wraps around the other UvrB subunit that will check the other stand for damage. The protein is UvrABC system protein B of Haemophilus influenzae (strain 86-028NP).